The chain runs to 553 residues: Arginine--tRNA ligase (553 aa).

Residues 130–140 carry the 'HIGH' region motif; sequence ANPTGDLHIGH.

This sequence belongs to the class-I aminoacyl-tRNA synthetase family. In terms of assembly, monomer.

The protein resides in the cytoplasm. The catalysed reaction is tRNA(Arg) + L-arginine + ATP = L-arginyl-tRNA(Arg) + AMP + diphosphate. This chain is Arginine--tRNA ligase, found in Staphylococcus epidermidis (strain ATCC 35984 / DSM 28319 / BCRC 17069 / CCUG 31568 / BM 3577 / RP62A).